The chain runs to 342 residues: Cystein proteinase inhibitor protein salarin (342 aa).

An N-terminal signal peptide occupies residues 1–19; the sequence is MKSLVLLLLVAVTVSSVVS. The N-linked (GlcNAc) asparagine glycan is linked to Asn153. Thr184 is a glycosylation site (O-linked (GlcNAc) threonine).

Post-translationally, N-glycosylated, with sialylated biantennary complex-type glycans. O-glycosylated, with sialylated oligosaccharides. As to expression, expressed in the skin, liver. intestine, spleen, pancreas and kidney.

Its subcellular location is the cytoplasm. The protein resides in the vacuole. Its function is as follows. Inhibits papain and ficin (cysteine proteinases) but not trypsin (a serine proteinase). The polypeptide is Cystein proteinase inhibitor protein salarin (salarin) (Salmo salar (Atlantic salmon)).